A 254-amino-acid polypeptide reads, in one-letter code: RNA polymerase sigma-D factor (254 aa).

A Polymerase core binding motif is present at residues aspartate 54–leucine 67. The segment at residues leucine 220–serine 239 is a DNA-binding region (H-T-H motif).

In terms of assembly, monomer. Interacts transiently with the RNAP core.

Its function is as follows. Sigma factors are initiation factors that promote the attachment of RNA polymerase (RNAP) to specific initiation sites and are then released. This alternative sigma factor is required for the transcription of the flagellin and motility genes as well as for wild-type chemotaxis. Associates with the RNAP core during all growth phases with a peak at the transition to stationary phase. This Bacillus subtilis (strain 168) protein is RNA polymerase sigma-D factor (sigD).